Here is a 276-residue protein sequence, read N- to C-terminus: NH(3)-dependent NAD(+) synthetase (276 aa).

G43–S50 lines the ATP pocket. Position 49 (D49) interacts with Mg(2+). R146 contributes to the deamido-NAD(+) binding site. T166 contacts ATP. E171 is a binding site for Mg(2+). Residues K179 and D186 each contribute to the deamido-NAD(+) site. ATP-binding residues include K195 and T217. H266 to K267 provides a ligand contact to deamido-NAD(+).

It belongs to the NAD synthetase family. In terms of assembly, homodimer.

The enzyme catalyses deamido-NAD(+) + NH4(+) + ATP = AMP + diphosphate + NAD(+) + H(+). The protein operates within cofactor biosynthesis; NAD(+) biosynthesis; NAD(+) from deamido-NAD(+) (ammonia route): step 1/1. Its function is as follows. Catalyzes the ATP-dependent amidation of deamido-NAD to form NAD. Uses ammonia as a nitrogen source. The sequence is that of NH(3)-dependent NAD(+) synthetase from Shewanella baltica (strain OS185).